Reading from the N-terminus, the 434-residue chain is Cyclic 2,3-diphosphoglycerate synthetase (434 aa).

It belongs to the cyclic 2,3-diphosphoglycerate synthetase family.

The protein resides in the cytoplasm. The catalysed reaction is (2R)-2,3-bisphosphoglycerate + ATP + H(+) = cyclic (2R)-2,3-bisphosphoglycerate + ADP + phosphate. Functionally, catalyzes the formation of cyclic 2,3-diphosphoglycerate (cDPG) by formation of an intramolecular phosphoanhydride bond at the expense of ATP. This is Cyclic 2,3-diphosphoglycerate synthetase from Thermococcus sibiricus (strain DSM 12597 / MM 739).